The following is a 598-amino-acid chain: Kinetochore-associated protein KNL-2 homolog (598 aa).

The SANTA domain occupies 19–111 (VVLRDWWLIK…IFGFPPCWER (93 aa)). 2 stretches are compositionally biased toward basic and acidic residues: residues 335-344 (AKSSKPEKKG) and 371-381 (KSAENKRKIDA). Disordered regions lie at residues 335–403 (AKSS…NNAK), 445–500 (KESL…EEAE), 520–542 (PEKK…QKRS), and 572–598 (KDGS…LKIK). Polar residues predominate over residues 383–392 (KLQSPTSNVA). The segment covering 527-539 (QKTNAASTDSLGQ) has biased composition (polar residues). Positions 538-572 (GQKRSRSGRVLVSSLEFWRNQIPVYDMDRNLIQVK) are required for localization at centromeres.

This sequence belongs to the KNL2 family. Expressed in shoot apical meristem, leaf primordia, basal parts of emerging leaves, inflorescence meristems, young inflorescences, developing flower buds, developing sepals and pistils, styles and young siliques.

The protein resides in the nucleus. It is found in the nucleoplasm. Its subcellular location is the nuclear body. It localises to the nucleolus. The protein localises to the chromosome. The protein resides in the centromere. Functionally, involved in recognition of centromeres and centromeric localization of the centromere-specific histone CENH3. Required for normal progression of mitosis and meiosis. May play a role in the determination of the epigenetic status of centromeres. Binds DNA and RNA in vitro. The sequence is that of Kinetochore-associated protein KNL-2 homolog from Arabidopsis thaliana (Mouse-ear cress).